The sequence spans 536 residues: Small conductance calcium-activated potassium channel protein 1 (536 aa).

A disordered region spans residues 1-90 (MSSRSHNGSV…KPPTVSHRLG (90 aa)). The segment covering 65-75 (QEEEEEEEDED) has biased composition (acidic residues). The chain crosses the membrane as a helical span at residues 107–127 (LIFGMFGIVVMVTETELSWGV). The helical transmembrane segment at 136–156 (FALKCLISLSTVILLGLVILY) threads the bilayer. The helical transmembrane segment at 224 to 244 (VLLSIPMFLRLYLLARVMLLH) threads the bilayer. Residues 273 to 293 (LMTICPGTVLLVFSISSWIVA) form a helical membrane-spanning segment. Residues 313 to 333 (FLGAMWLISITFLSIGYGDMV) traverse the membrane as a helical segment. Residues 342 to 362 (VCLLTGIMGAGCTALVVAVVA) constitute an intramembrane region (pore-forming). Positions 380–459 (DTQLTKRVKN…LADLAKAQSI (80 aa)) are calmodulin-binding. Residues 487–507 (VLGASLQALPSLIAQAICPLP) form a helical membrane-spanning segment. Positions 514-536 (SHLTTAAQSPQSHWLPTTASDCG) are disordered. Positions 515-536 (HLTTAAQSPQSHWLPTTASDCG) are enriched in polar residues.

The protein belongs to the potassium channel KCNN family. KCa2.1/KCNN1 subfamily. In terms of assembly, homodimer. Heteromultimer with KCNN2 and KCNN3. The complex is composed of 4 channel subunits each of which binds to a calmodulin subunit which regulates the channel activity through calcium-binding. Interacts with calmodulin. Widely expressed including brain.

It is found in the membrane. It localises to the cytoplasm. Its subcellular location is the myofibril. The protein resides in the sarcomere. The protein localises to the z line. It carries out the reaction K(+)(in) = K(+)(out). With respect to regulation, inhibited by bee venom neurotoxin apamin. Inhibited by d-tubocurarine and tetraethylammonium (TEA). Small conductance calcium-activated potassium channel that mediates the voltage-independent transmembrane transfer of potassium across the cell membrane through a constitutive interaction with calmodulin which binds the intracellular calcium allowing its opening. The current is characterized by a voltage-independent activation, an intracellular calcium concentration increase-dependent activation and a single-channel conductance of about 3 picosiemens. Also presents an inwardly rectifying current, thus reducing its already small outward conductance of potassium ions, which is particularly the case when the membrane potential displays positive values, above + 20 mV. Activation is followed by membrane hyperpolarization. Thought to regulate neuronal excitability by contributing to the slow component of synaptic afterhyperpolarization. The chain is Small conductance calcium-activated potassium channel protein 1 from Rattus norvegicus (Rat).